The primary structure comprises 500 residues: Putative (R)-citramalate synthase CimA (500 aa).

The region spanning 9-258 (LRFFDTTLRD…DTRIRTERLY (250 aa)) is the Pyruvate carboxyltransferase domain.

Belongs to the alpha-IPM synthase/homocitrate synthase family. In terms of assembly, homodimer.

The enzyme catalyses pyruvate + acetyl-CoA + H2O = (3R)-citramalate + CoA + H(+). It participates in amino-acid biosynthesis; L-isoleucine biosynthesis; 2-oxobutanoate from pyruvate: step 1/3. Its function is as follows. Catalyzes the condensation of pyruvate and acetyl-coenzyme A to form (R)-citramalate. The chain is Putative (R)-citramalate synthase CimA from Methanosphaerula palustris (strain ATCC BAA-1556 / DSM 19958 / E1-9c).